The primary structure comprises 434 residues: Methylenetetrahydrofolate--tRNA-(uracil-5-)-methyltransferase TrmFO (434 aa).

10 to 15 is an FAD binding site; the sequence is GAGLAG.

It belongs to the MnmG family. TrmFO subfamily. FAD is required as a cofactor.

The protein resides in the cytoplasm. The catalysed reaction is uridine(54) in tRNA + (6R)-5,10-methylene-5,6,7,8-tetrahydrofolate + NADH + H(+) = 5-methyluridine(54) in tRNA + (6S)-5,6,7,8-tetrahydrofolate + NAD(+). It carries out the reaction uridine(54) in tRNA + (6R)-5,10-methylene-5,6,7,8-tetrahydrofolate + NADPH + H(+) = 5-methyluridine(54) in tRNA + (6S)-5,6,7,8-tetrahydrofolate + NADP(+). Functionally, catalyzes the folate-dependent formation of 5-methyl-uridine at position 54 (M-5-U54) in all tRNAs. The sequence is that of Methylenetetrahydrofolate--tRNA-(uracil-5-)-methyltransferase TrmFO from Bacillus mycoides (strain KBAB4) (Bacillus weihenstephanensis).